Consider the following 240-residue polypeptide: Large ribosomal subunit protein uL2 (240 aa).

Positions 1-10 (MGHRISTQSR) are enriched in polar residues. 2 disordered regions span residues 1–20 (MGHRISTQSRGKGGPTYRAP) and 204–240 (FGGGGHQHPGKPKTVARGASPGRKVGSVAARRTGYRR).

The protein belongs to the universal ribosomal protein uL2 family. Part of the 50S ribosomal subunit. Forms a bridge to the 30S subunit in the 70S ribosome.

Its function is as follows. One of the primary rRNA binding proteins. Required for association of the 30S and 50S subunits to form the 70S ribosome, for tRNA binding and peptide bond formation. It has been suggested to have peptidyltransferase activity; this is somewhat controversial. Makes several contacts with the 16S rRNA in the 70S ribosome. In Methanocorpusculum labreanum (strain ATCC 43576 / DSM 4855 / Z), this protein is Large ribosomal subunit protein uL2.